Reading from the N-terminus, the 2263-residue chain is Collagen alpha-6(VI) chain (2263 aa).

A signal peptide spans 1–19 (MMLLILFLVIICSHISVNQ). The interval 20–1391 (DSGPEYADVV…TCCCLFCKCI (1372 aa)) is nonhelical region. VWFA domains follow at residues 27–206 (DVVF…IKDV), 229–411 (DVVF…RNQI), 436–606 (DIYL…RNQV), 622–791 (DIMF…EDDL), and 809–982 (DVVF…FSDV). 5 N-linked (GlcNAc...) asparagine glycosylation sites follow: Asn198, Asn275, Asn288, Asn347, and Asn520. N-linked (GlcNAc...) asparagine glycosylation is found at Asn930 and Asn988. 2 consecutive VWFA domains span residues 1000–1171 (DLVF…NKRI) and 1187–1371 (DVVV…GSRL). A glycan (N-linked (GlcNAc...) asparagine) is linked at Asn1290. A triple-helical region region spans residues 1392 to 1725 (GGDGTMGDPG…GRKGVKGAKG (334 aa)). Residues 1397-1723 (MGDPGPPGKR…PPGRKGVKGA (327 aa)) are disordered. A compositionally biased stretch (basic and acidic residues) spans 1498–1508 (TPGDRGAKGLR). The short motif at 1508–1510 (RGD) is the Cell attachment site element. Basic residues predominate over residues 1547-1559 (SRRKTAAHGRRGH). The span at 1680–1689 (GDPGGPGETG) shows a compositional bias: gly residues. Residues 1726–2263 (LASFSTCELI…MIESAPKQHD (538 aa)) form a nonhelical region region. VWFA domains follow at residues 1757–1937 (ELVF…ERLQ) and 1965–2166 (DAAF…INSI).

This sequence belongs to the type VI collagen family. Trimers composed of three different chains: alpha-1(VI), alpha-2(VI), and alpha-3(VI) or alpha-5(VI) or alpha-6(VI). In terms of processing, prolines at the third position of the tripeptide repeating unit (G-X-Y) are hydroxylated in some or all of the chains.

It localises to the secreted. The protein resides in the extracellular space. The protein localises to the extracellular matrix. In terms of biological role, collagen VI acts as a cell-binding protein. The protein is Collagen alpha-6(VI) chain (COL6A6) of Homo sapiens (Human).